A 480-amino-acid polypeptide reads, in one-letter code: Flotillin-like protein 2 (480 aa).

The S-palmitoyl cysteine moiety is linked to residue C37. The stretch at 237–257 (ENQREAEVAQANSELAKKKAA) forms a coiled coil.

Belongs to the band 7/mec-2 family. Flotillin subfamily. May be palmitoylated. In terms of tissue distribution, expressed in flowers in green pods. Primarily expressed in vascular tissues. Upon induction of nodulation, expansion of expression in the root cortex in the region of elongating root hairs, which will eventually become colonized by bacteria. Expressed in the infection zone in nodules.

It is found in the cell membrane. The protein resides in the membrane. Its subcellular location is the caveola. Functionally, may act as a scaffolding protein within caveolar membranes, functionally participating in formation of caveolae or caveolae-like vesicles. Required for early symbiotic events and nodules formation. This Medicago truncatula (Barrel medic) protein is Flotillin-like protein 2 (FLOT2).